A 239-amino-acid chain; its full sequence is MVQPQTSKAESPALAASPNAQMDDVIDTLTSLRLTNSALRREASTLRAEKANLTNMLESVMAELTLLRTRARIPGALQITPPISSITSNGTRPMTTPPTSLPEPFSGDPGRLAGFLMQMDRFMIFQASRFPGEAERVAFLVSRLTGEAEKWAIPHMQPDSPLRNNYQGFLAELRRTYKSPLRHARRAQIRKTSASNRAVRERQMLCRQLASAGTGPCPVHPASNGTSPAPALPARARNL.

Residues 29–69 (LTSLRLTNSALRREASTLRAEKANLTNMLESVMAELTLLRT) adopt a coiled-coil conformation. Positions 82 to 94 (PISSITSNGTRPM) are enriched in polar residues. Disordered regions lie at residues 82 to 106 (PISS…EPFS) and 214 to 239 (TGPC…ARNL). The segment covering 228–239 (PAPALPARARNL) has biased composition (low complexity).

This sequence belongs to the LDOC1 family.

The polypeptide is Retrotransposon Gag-like protein 6 (Homo sapiens (Human)).